Reading from the N-terminus, the 411-residue chain is C6 finger domain transcription factor hasA (411 aa).

A compositionally biased stretch (polar residues) spans 1–17; it reads MTSTLPYLTSPPATHPS. The segment at 1–21 is disordered; sequence MTSTLPYLTSPPATHPSNSDH. The segment at residues 28–54 is a DNA-binding region (zn(2)-C6 fungal-type); it reads CDSCHQCKVKCSGGSPCFRCTSKGLNC.

Its subcellular location is the nucleus. Transcription factor; part of the gene cluster that mediates the biosynthesis of hexadehydro-astechrome (HAS), a tryptophan-derived iron(III)-complex that acts as a virulence factor in infected mice. Positively regulates the expression of the HAS biosynthetic genes. This chain is C6 finger domain transcription factor hasA, found in Aspergillus fumigatus (strain CBS 144.89 / FGSC A1163 / CEA10) (Neosartorya fumigata).